Here is a 324-residue protein sequence, read N- to C-terminus: Holliday junction branch migration complex subunit RuvB (324 aa).

Residues 1 to 168 form a large ATPase domain (RuvB-L) region; that stretch reads MEDLALRPKT…FGIVEHLEYY (168 aa). ATP-binding positions include leucine 6, arginine 7, glycine 48, lysine 51, threonine 52, threonine 53, 115–117, arginine 158, tyrosine 168, and arginine 205; that span reads EDF. A Mg(2+)-binding site is contributed by threonine 52. Residues 169-239 are small ATPAse domain (RuvB-S); that stretch reads TPEELAQGVM…RALEALAALG (71 aa). The segment at 242 to 324 is head domain (RuvB-H); it reads ELGLEKRDRE…PPPVGPLLEP (83 aa). DNA contacts are provided by arginine 297 and arginine 302.

The protein belongs to the RuvB family. In terms of assembly, homohexamer. Forms an RuvA(8)-RuvB(12)-Holliday junction (HJ) complex. HJ DNA is sandwiched between 2 RuvA tetramers; dsDNA enters through RuvA and exits via RuvB. An RuvB hexamer assembles on each DNA strand where it exits the tetramer. Each RuvB hexamer is contacted by two RuvA subunits (via domain III) on 2 adjacent RuvB subunits; this complex drives branch migration. In the full resolvosome a probable DNA-RuvA(4)-RuvB(12)-RuvC(2) complex forms which resolves the HJ.

It localises to the cytoplasm. It catalyses the reaction ATP + H2O = ADP + phosphate + H(+). With respect to regulation, the ATPase activity of RuvB is enhanced by RuvA. The RuvA-RuvB-RuvC complex processes Holliday junction (HJ) DNA during genetic recombination and DNA repair, while the RuvA-RuvB complex plays an important role in the rescue of blocked DNA replication forks via replication fork reversal (RFR). RuvA specifically binds to HJ cruciform DNA, conferring on it an open structure. The RuvB hexamer acts as an ATP-dependent pump, pulling dsDNA into and through the RuvAB complex. RuvB forms 2 homohexamers on either side of HJ DNA bound by 1 or 2 RuvA tetramers; 4 subunits per hexamer contact DNA at a time. Coordinated motions by a converter formed by DNA-disengaged RuvB subunits stimulates ATP hydrolysis and nucleotide exchange. Immobilization of the converter enables RuvB to convert the ATP-contained energy into a lever motion, pulling 2 nucleotides of DNA out of the RuvA tetramer per ATP hydrolyzed, thus driving DNA branch migration. The RuvB motors rotate together with the DNA substrate, which together with the progressing nucleotide cycle form the mechanistic basis for DNA recombination by continuous HJ branch migration. Branch migration allows RuvC to scan DNA until it finds its consensus sequence, where it cleaves and resolves cruciform DNA. Functionally, has Mg(2+)-, DNA-dependent ATPase activity; dsDNA and supercoiled DNA but not ssDNA stimulate activity. Binds to linear dsDNA in the absence of ATP or ATP-gamma-S. This subunit can promote Holliday junction migration alone in vitro. Partially complements an E.coli deletion for UV sensitivity. In Thermus thermophilus, this protein is Holliday junction branch migration complex subunit RuvB.